The following is a 274-amino-acid chain: Protein TIFY 11A (274 aa).

Disordered stretches follow at residues 49 to 95 (SLAL…SQPG) and 139 to 176 (PINDENNNNKSSMVLPDLNEPTDNNHLTKEQQQQQEQN). Positions 92–127 (SQPGSSQLTIFFGGKVLVYNEFPVDKAKEIMEVAKQ) constitute a Tify domain. The segment covering 139-150 (PINDENNNNKSS) has biased composition (polar residues). Positions 161 to 185 (DNNHLTKEQQQQQEQNQIVERIARR) form a coiled coil. The Jas motif lies at 182-206 (IARRASLHRFFAKRKDRAVARAPYQ). The Nuclear localization signal signature appears at 183-190 (ARRASLHR). The tract at residues 206-274 (QVNQNAGHHR…QSSKDLDLRL (69 aa)) is disordered. The segment covering 249-274 (IKSDGDKDDIMKIEEGQSSKDLDLRL) has biased composition (basic and acidic residues).

It belongs to the TIFY/JAZ family. Homo- and heterodimer. Interacts with MYC2, MYC3, MYC4, AFPH2/NINJA, TIFY10A/JAZ1, TIFY10B/JAZ2, TIFY11B/JAZ6, TIFY5A/JAZ8 and TIFY3B/JAZ12. In terms of assembly, (Microbial infection) Interacts with the pathogenic Pseudomonas syringae HopZ1a protein. Post-translationally, (Microbial infection) Acetylated by Pseudomonas syringae HopZ1a. In terms of processing, ubiquitinated. Targeted for degradation by the SCF(COI1) E3 ubiquitin ligase-proteasome pathway during jasmonate signaling.

Its subcellular location is the nucleus. Its function is as follows. Repressor of jasmonate responses. This Arabidopsis thaliana (Mouse-ear cress) protein is Protein TIFY 11A.